The chain runs to 323 residues: uncharacterized protein (323 aa).

A disordered region spans residues M1 to N21. G2 carries the N-myristoyl glycine; by host lipid modification.

This is an uncharacterized protein from Acanthamoeba polyphaga (Amoeba).